The chain runs to 196 residues: Imidazoleglycerol-phosphate dehydratase (196 aa).

The protein belongs to the imidazoleglycerol-phosphate dehydratase family.

Its subcellular location is the cytoplasm. The catalysed reaction is D-erythro-1-(imidazol-4-yl)glycerol 3-phosphate = 3-(imidazol-4-yl)-2-oxopropyl phosphate + H2O. It functions in the pathway amino-acid biosynthesis; L-histidine biosynthesis; L-histidine from 5-phospho-alpha-D-ribose 1-diphosphate: step 6/9. The polypeptide is Imidazoleglycerol-phosphate dehydratase (Dehalococcoides mccartyi (strain CBDB1)).